We begin with the raw amino-acid sequence, 658 residues long: DNA mismatch repair protein MutL (658 aa).

Residues 114–130 (RQEDSSHATQVKAEDGK) show a composition bias toward basic and acidic residues. 3 disordered regions span residues 114 to 137 (RQEDSSHATQVKAEDGKLSSPTAA), 369 to 401 (DYPTGNKPDTRNAFGSSGKTAPMPYQSAYAPQQ), and 438 to 457 (FGNMPSETPAPKTDTPLSDG).

Belongs to the DNA mismatch repair MutL/HexB family.

Its function is as follows. This protein is involved in the repair of mismatches in DNA. It is required for dam-dependent methyl-directed DNA mismatch repair. May act as a 'molecular matchmaker', a protein that promotes the formation of a stable complex between two or more DNA-binding proteins in an ATP-dependent manner without itself being part of a final effector complex. This chain is DNA mismatch repair protein MutL, found in Neisseria meningitidis serogroup A / serotype 4A (strain DSM 15465 / Z2491).